Reading from the N-terminus, the 399-residue chain is Formate-dependent phosphoribosylglycinamide formyltransferase (399 aa).

Residues 22 to 23 (EL) and Glu82 contribute to the N(1)-(5-phospho-beta-D-ribosyl)glycinamide site. Residues Arg114, Lys155, 160–165 (SSGKGQ), 195–198 (EKMI), and Glu203 each bind ATP. Residues 119-308 (RLAAETLHLL…EFALHVRAFL (190 aa)) form the ATP-grasp domain. 2 residues coordinate Mg(2+): Glu267 and Glu279. Residues Asp286, Lys355, and 362-363 (RR) each bind N(1)-(5-phospho-beta-D-ribosyl)glycinamide.

It belongs to the PurK/PurT family. In terms of assembly, homodimer.

The catalysed reaction is N(1)-(5-phospho-beta-D-ribosyl)glycinamide + formate + ATP = N(2)-formyl-N(1)-(5-phospho-beta-D-ribosyl)glycinamide + ADP + phosphate + H(+). It functions in the pathway purine metabolism; IMP biosynthesis via de novo pathway; N(2)-formyl-N(1)-(5-phospho-D-ribosyl)glycinamide from N(1)-(5-phospho-D-ribosyl)glycinamide (formate route): step 1/1. Functionally, involved in the de novo purine biosynthesis. Catalyzes the transfer of formate to 5-phospho-ribosyl-glycinamide (GAR), producing 5-phospho-ribosyl-N-formylglycinamide (FGAR). Formate is provided by PurU via hydrolysis of 10-formyl-tetrahydrofolate. This chain is Formate-dependent phosphoribosylglycinamide formyltransferase, found in Proteus mirabilis (strain HI4320).